An 87-amino-acid polypeptide reads, in one-letter code: Large ribosomal subunit protein bL27 (87 aa).

The protein belongs to the bacterial ribosomal protein bL27 family.

In Paenarthrobacter aurescens (strain TC1), this protein is Large ribosomal subunit protein bL27.